The chain runs to 606 residues: EPM2A-interacting protein 1 (606 aa).

Residue Ser-147 is modified to Phosphoserine.

Interacts with EPM2A.

It is found in the endoplasmic reticulum. The sequence is that of EPM2A-interacting protein 1 (Epm2aip1) from Mus musculus (Mouse).